The chain runs to 159 residues: Succinate dehydrogenase [ubiquinone] cytochrome b small subunit, mitochondrial (159 aa).

The N-terminal 56 residues, 1–56 (MAVLWRLSAVCGALGGRALLLRTPVVRPAHISAFLQDRPIPEWCGVQHIHLSPSHH), are a transit peptide targeting the mitochondrion. Topologically, residues 57-63 (SGSKAAS) are mitochondrial matrix. Residues 64–85 (LHWTSERVVSVLLLGLLPAAYL) form a helical membrane-spanning segment. The Mitochondrial intermembrane portion of the chain corresponds to 86–90 (NPCSA). A helical membrane pass occupies residues 91–111 (MDYSLAAALTLHGHWGLGQVV). H102 contacts heme b. The Mitochondrial matrix portion of the chain corresponds to 112 to 122 (TDYVHGDALQK). Position 114 (Y114) interacts with a ubiquinone. The helical transmembrane segment at 123 to 144 (AAKAGLLALSALTFAGLCYFNY) threads the bilayer. Residues 145–159 (HDVGICKAVAMLWKL) lie on the Mitochondrial intermembrane side of the membrane.

This sequence belongs to the CybS family. Component of complex II composed of four subunits: the flavoprotein (FP) SDHA, iron-sulfur protein (IP) SDHB, and a cytochrome b560 composed of SDHC and SDHD.

The protein resides in the mitochondrion inner membrane. Its pathway is carbohydrate metabolism; tricarboxylic acid cycle. In terms of biological role, membrane-anchoring subunit of succinate dehydrogenase (SDH) that is involved in complex II of the mitochondrial electron transport chain and is responsible for transferring electrons from succinate to ubiquinone (coenzyme Q). SDH also oxidizes malate to the non-canonical enol form of oxaloacetate, enol-oxaloacetate. Enol-oxaloacetate, which is a potent inhibitor of the succinate dehydrogenase activity, is further isomerized into keto-oxaloacetate. This Homo sapiens (Human) protein is Succinate dehydrogenase [ubiquinone] cytochrome b small subunit, mitochondrial (SDHD).